Here is a 1033-residue protein sequence, read N- to C-terminus: NACHT, LRR and PYD domains-containing protein 11 (1033 aa).

In terms of domain architecture, Pyrin spans 1–91; that stretch reads MAESDSTDFD…CRKIIGRRNR (91 aa). The 324-residue stretch at 147 to 470 folds into the NACHT domain; sequence LNVFLMGERA…AFLMAVPNYL (324 aa). Position 153–160 (153–160) interacts with ATP; it reads GERASGKT. 6 LRR repeats span residues 588–611, 632–655, 745–768, 802–827, 859–882, and 919–944; these read CCHL…LIRP, MESL…ILSK, GGSL…ILCD, SPTL…TFPL, NEKL…LLCG, and LERL…LISP.

It belongs to the NLRP family.

Its function is as follows. Involved in inflammation. This chain is NACHT, LRR and PYD domains-containing protein 11 (NLRP11), found in Homo sapiens (Human).